A 60-amino-acid polypeptide reads, in one-letter code: Cecropin-B type 2 (60 aa).

An N-terminal signal peptide occupies residues 1-24 (MNFSKLFALVLLIGLVLLTGQTEA). Position 58 is an isoleucine amide (I58).

It belongs to the cecropin family.

It localises to the secreted. Functionally, cecropins have lytic and antibacterial activity against several Gram-positive and Gram-negative bacteria. The protein is Cecropin-B type 2 (CECB2) of Aedes albopictus (Asian tiger mosquito).